Here is a 572-residue protein sequence, read N- to C-terminus: RNA polymerase sigma factor sigB (572 aa).

A chloroplast-targeting transit peptide spans 1-39 (MSSCLLPQFKCPPDSFSIHFRTSFCAPKHNKGSVFFQPQ). Positions 215-249 (TRQTERKARRAKGLEKTASGIPSVKTGSSPKKKRL) are disordered. Positions 360–373 (DLVQEGCRGLVRGA) match the Polymerase core binding motif. The segment at residues 530–549 (LQEIGEMMGVSRERVRQIES) is a DNA-binding region (H-T-H motif).

This sequence belongs to the sigma-70 factor family. As to expression, highly expressed in cotyledons, to a lesser extent in leaves, sepals and siliques, and barely expressed in roots. Present in seedlings.

It localises to the plastid. The protein resides in the chloroplast. Its function is as follows. Required for the transition of plastids into chloroplasts by coordinating nuclear and chloroplastic genomes under light conditions. Sigma factors are initiation factors that promote the attachment of plastid-encoded RNA polymerase (PEP) to specific initiation sites and are then released. Promotes the biosynthesis of plastid-encoded tRNAs (e.g. trnE-UUC and trnV-UAC). The polypeptide is RNA polymerase sigma factor sigB (SIGB) (Arabidopsis thaliana (Mouse-ear cress)).